The sequence spans 191 residues: Rho-related GTP-binding protein RhoH (191 aa).

11-18 provides a ligand contact to GTP; it reads GDSAVGKT. The short motif at 33-41 is the Effector region element; the sequence is YKPTVYENT. 58-62 contributes to the GTP binding site; it reads DTAGN. Residues 73-86 form an interaction with ZAP70 region; it reads YQQADVVLMCYSVA. 116-119 contributes to the GTP binding site; sequence TQTD. Cysteine methyl ester is present on cysteine 188. Cysteine 188 carries S-geranylgeranyl cysteine lipidation. The propeptide at 189 to 191 is removed in mature form; that stretch reads KIF.

Belongs to the small GTPase superfamily. Rho family. Interacts with GDI1 and GDI2. Interacts with ZAP70 (via SH2 domains) and the interaction is enhanced by its phosphorylation by LCK. Interacts with SYK and the interaction is enhanced by its phosphorylation by FYN. Phosphorylated on tyrosine by LCK. Phosphorylated by FYN. Phosphorylation enhances the interactions with ZAP70 and SYK and is critical for its function in thymocyte development. Expression is widespread in hematopoietic cells, including in bone marrow progenitor cells and in differentiated myeloid as well as lymphoid cells. Expressed at high levels in the thymus and mast cells, found in spleen and low-density bone marrow (LDBM) cells and is detected at a low level in neutrophils. In the thymus it is detected in thymocytes of the thymic cortex but not in non-lymphoid cells of fibrovascular and fibroadipose tissues. Expressed in T-cells, B-cells and mast cells.

It localises to the cytoplasm. Its subcellular location is the cell membrane. Functionally, binds GTP but lacks intrinsic GTPase activity and is resistant to Rho-specific GTPase-activating proteins. Inhibits the activation of NF-kappa-B by TNF and IKKB and the activation of CRK/p38 by TNF. Inhibits activities of RAC1, RHOA and CDC42. Negatively regulates leukotriene production in neutrophils. Negative regulator of hematopoietic progenitor cell proliferation, survival and migration. Critical regulator of thymocyte development and T-cell antigen receptor (TCR) signaling by mediating recruitment and activation of ZAP70. Required for phosphorylation of CD3Z, membrane translocation of ZAP70 and subsequent activation of the ZAP70-mediated pathways. Essential for efficient beta-selection and positive selection by promoting the ZAP70-dependent phosphorylation of the LAT signalosome during pre-TCR and TCR signaling. Crucial for thymocyte maturation during DN3 to DN4 transition and during positive selection. Plays critical roles in mast cell function by facilitating phosphorylation of SYK in Fc epsilon RI-mediated signal transduction. Essential for the phosphorylation of LAT, LCP2, PLCG1 and PLCG2 and for Ca(2+) mobilization in mast cells. The chain is Rho-related GTP-binding protein RhoH (Rhoh) from Mus musculus (Mouse).